The chain runs to 74 residues: Conotoxin Bu4 (74 aa).

Positions 1 to 22 (MKLTCVVIVAVLLLTACQLIIA) are cleaved as a signal peptide. Positions 23-45 (EDSRGTQLHRALRKATKLSVSTR) are excised as a propeptide. Intrachain disulfides connect cysteine 47–cysteine 63, cysteine 54–cysteine 66, and cysteine 62–cysteine 73.

The protein belongs to the conotoxin O1 superfamily. Expressed by the venom duct.

The protein localises to the secreted. The sequence is that of Conotoxin Bu4 from Conus bullatus (Bubble cone).